We begin with the raw amino-acid sequence, 236 residues long: Alanyl-tRNA editing protein AlaX-M (236 aa).

The Zn(2+) site is built by H101, H105, and H205.

It belongs to the class-II aminoacyl-tRNA synthetase family. Editing domain AlaX-M subfamily. Zn(2+) serves as cofactor.

The protein resides in the cytoplasm. In terms of biological role, functions in trans to edit the amino acid moiety from incorrectly charged Ser-tRNA(Ala). This chain is Alanyl-tRNA editing protein AlaX-M (alaXM), found in Saccharolobus solfataricus (strain ATCC 35092 / DSM 1617 / JCM 11322 / P2) (Sulfolobus solfataricus).